Reading from the N-terminus, the 307-residue chain is Ribosomal RNA small subunit methyltransferase H (307 aa).

Residues 32 to 34, Asp-52, Phe-78, Asp-100, and Gln-107 each bind S-adenosyl-L-methionine; that span reads GGH.

It belongs to the methyltransferase superfamily. RsmH family.

It localises to the cytoplasm. It carries out the reaction cytidine(1402) in 16S rRNA + S-adenosyl-L-methionine = N(4)-methylcytidine(1402) in 16S rRNA + S-adenosyl-L-homocysteine + H(+). Specifically methylates the N4 position of cytidine in position 1402 (C1402) of 16S rRNA. In Coxiella burnetii (strain CbuK_Q154) (Coxiella burnetii (strain Q154)), this protein is Ribosomal RNA small subunit methyltransferase H.